Here is a 306-residue protein sequence, read N- to C-terminus: Curved DNA-binding protein (306 aa).

Positions 5 to 69 constitute a J domain; the sequence is DYYAIMGVKP…QRRAEYDQLW (65 aa).

The protein resides in the cytoplasm. Its subcellular location is the nucleoid. Functionally, DNA-binding protein that preferentially recognizes a curved DNA sequence. It is probably a functional analog of DnaJ; displays overlapping activities with DnaJ, but functions under different conditions, probably acting as a molecular chaperone in an adaptive response to environmental stresses other than heat shock. Lacks autonomous chaperone activity; binds native substrates and targets them for recognition by DnaK. Its activity is inhibited by the binding of CbpM. In Salmonella arizonae (strain ATCC BAA-731 / CDC346-86 / RSK2980), this protein is Curved DNA-binding protein.